The primary structure comprises 121 residues: Large ribosomal subunit protein bL12 (121 aa).

Belongs to the bacterial ribosomal protein bL12 family. As to quaternary structure, homodimer. Part of the ribosomal stalk of the 50S ribosomal subunit. Forms a multimeric L10(L12)X complex, where L10 forms an elongated spine to which 2 to 4 L12 dimers bind in a sequential fashion. Binds GTP-bound translation factors.

In terms of biological role, forms part of the ribosomal stalk which helps the ribosome interact with GTP-bound translation factors. Is thus essential for accurate translation. This chain is Large ribosomal subunit protein bL12, found in Shewanella halifaxensis (strain HAW-EB4).